We begin with the raw amino-acid sequence, 78 residues long: Major outer membrane lipoprotein Lpp 1 (78 aa).

The signal sequence occupies residues 1 to 20 (MNRTKLVLGAVILGSTLLAG). The N-palmitoyl cysteine moiety is linked to residue cysteine 21. Residue cysteine 21 is the site of S-diacylglycerol cysteine attachment. 2 repeats span residues 24–34 (NAKIDQLSSDV) and 38–48 (NAKVDQLSNDV). Positions 27–75 (IDQLSSDVQTLNAKVDQLSNDVNAMRSDVQAAKDDAARANQRLDNQATK) form a coiled coil. The disordered stretch occupies residues 56-78 (QAAKDDAARANQRLDNQATKYRK). Polar residues predominate over residues 68–78 (RLDNQATKYRK). Lysine 78 carries the post-translational modification N6-murein peptidoglycan lysine.

It belongs to the Lpp family. As to quaternary structure, homotrimer.

The protein localises to the cell outer membrane. It is found in the secreted. The protein resides in the cell wall. A highly abundant outer membrane lipoprotein that controls the distance between the inner and outer membranes. The only protein known to be covalently linked to the peptidoglycan network (PGN). Also non-covalently binds the PGN. The link between the cell outer membrane and PGN contributes to maintenance of the structural and functional integrity of the cell envelope, and maintains the correct distance between the PGN and the outer membrane. This is Major outer membrane lipoprotein Lpp 1 from Salmonella paratyphi A (strain ATCC 9150 / SARB42).